A 277-amino-acid polypeptide reads, in one-letter code: Phosphate import ATP-binding protein PstB (277 aa).

The 242-residue stretch at 31-272 (IEVPGLSLFY…PAKKQTEDYI (242 aa)) folds into the ABC transporter domain. 63-70 (GPSGCGKS) is an ATP binding site.

The protein belongs to the ABC transporter superfamily. Phosphate importer (TC 3.A.1.7) family. The complex is composed of two ATP-binding proteins (PstB), two transmembrane proteins (PstC and PstA) and a solute-binding protein (PstS).

The protein localises to the cell inner membrane. It catalyses the reaction phosphate(out) + ATP + H2O = ADP + 2 phosphate(in) + H(+). Part of the ABC transporter complex PstSACB involved in phosphate import. Responsible for energy coupling to the transport system. The polypeptide is Phosphate import ATP-binding protein PstB (Pseudomonas fluorescens (strain Pf0-1)).